The following is a 489-amino-acid chain: NADH-quinone oxidoreductase subunit N (489 aa).

The next 14 helical transmembrane spans lie at 6 to 26, 37 to 57, 66 to 86, 105 to 125, 127 to 147, 159 to 179, 204 to 224, 239 to 259, 271 to 291, 299 to 319, 329 to 349, 377 to 397, 408 to 430, and 452 to 472; these read VLFI…AVML, VFYI…PASS, LLIV…GSLA, FYLL…AHHL, AIFI…GYAF, YMVL…LIYA, ITLL…KLSL, PAPV…AVLL, FFYS…NLLA, RLLG…LIAC, VALY…VVSL, SAMT…GFIG, FHLW…YYLR, and ALTT…LLGI.

The protein belongs to the complex I subunit 2 family. In terms of assembly, NDH-1 is composed of 14 different subunits. Subunits NuoA, H, J, K, L, M, N constitute the membrane sector of the complex.

Its subcellular location is the cell inner membrane. The catalysed reaction is a quinone + NADH + 5 H(+)(in) = a quinol + NAD(+) + 4 H(+)(out). Its function is as follows. NDH-1 shuttles electrons from NADH, via FMN and iron-sulfur (Fe-S) centers, to quinones in the respiratory chain. The immediate electron acceptor for the enzyme in this species is believed to be ubiquinone. Couples the redox reaction to proton translocation (for every two electrons transferred, four hydrogen ions are translocated across the cytoplasmic membrane), and thus conserves the redox energy in a proton gradient. This is NADH-quinone oxidoreductase subunit N from Tolumonas auensis (strain DSM 9187 / NBRC 110442 / TA 4).